Consider the following 482-residue polypeptide: Argininosuccinate synthase (482 aa).

ATP is bound by residues 17 to 25 and A43; that span reads AFSGGLDTS. Position 99 (Y99) interacts with L-citrulline. 2 residues coordinate ATP: G129 and T131. L-aspartate is bound by residues T131, N135, and D136. N135 is an L-citrulline binding site. D136 contributes to the ATP binding site. L-citrulline contacts are provided by R139 and S192. D194 contacts ATP. Positions 201, 203, and 280 each coordinate L-citrulline. Positions 461 to 482 are disordered; it reads SRGEATDEETMLDRAAMESGTD.

This sequence belongs to the argininosuccinate synthase family. Type 2 subfamily. In terms of assembly, homotetramer.

It is found in the cytoplasm. The catalysed reaction is L-citrulline + L-aspartate + ATP = 2-(N(omega)-L-arginino)succinate + AMP + diphosphate + H(+). The protein operates within amino-acid biosynthesis; L-arginine biosynthesis; L-arginine from L-ornithine and carbamoyl phosphate: step 2/3. The sequence is that of Argininosuccinate synthase (argG) from Streptomyces lavendulae.